Consider the following 880-residue polypeptide: Kinesin heavy chain (880 aa).

A Kinesin motor domain is found at 4–327; sequence SIKVVCRFRP…LRFGMRAKAI (324 aa). Residues 85-92 and 235-242 contribute to the ATP site; these read GQTGAGKS and GSEKVGKT. Residues 388–426 are disordered; it reads VSGAKAAAAQTPRPSTPSRLATESRAETPVAERSATPGI. Over residues 399 to 408 the composition is skewed to polar residues; that stretch reads PRPSTPSRLA. The stretch at 428 to 849 forms a coiled coil; the sequence is IDKDEREEFL…QEKLTTASHR (422 aa).

The protein belongs to the TRAFAC class myosin-kinesin ATPase superfamily. Kinesin family. Kinesin subfamily.

It localises to the cytoplasm. It is found in the cytoskeleton. Kinesin is a microtubule-associated force-producing protein that may play a role in organelle transport. Its motor activity is directed toward the microtubule's plus end. The polypeptide is Kinesin heavy chain (klp1) (Botryotinia fuckeliana (Noble rot fungus)).